Here is a 527-residue protein sequence, read N- to C-terminus: Low-affinity Na(+)/H(+) antiporter NhaS1 (527 aa).

11 consecutive transmembrane segments (helical) span residues 18–38, 41–61, 94–114, 126–146, 169–189, 196–216, 240–260, 276–296, 311–331, 352–372, and 380–400; these read FLIV…VPIL, IPYT…DVKL, WFPI…GIAF, IAFL…IALF, VAVV…TFDL, FVTV…SLSL, ILAE…GMVL, IVSI…FLLI, LILI…FGLS, TVLW…LSVP, and AIID…GLTT.

Belongs to the monovalent cation:proton antiporter 1 (CPA1) transporter (TC 2.A.36) family.

It is found in the cell membrane. Its function is as follows. Na(+)/H(+) antiporter that extrudes sodium in exchange for external protons. Might be able to function at relatively high concentrations of Na(+) ions. Also has Li(+)/H(+) antiport activity under K(+)-rich conditions, but it might not have any physiological relevance. The protein is Low-affinity Na(+)/H(+) antiporter NhaS1 (nhaS1) of Synechocystis sp. (strain ATCC 27184 / PCC 6803 / Kazusa).